A 266-amino-acid polypeptide reads, in one-letter code: Indole-3-glycerol phosphate synthase (266 aa).

The protein belongs to the TrpC family.

The enzyme catalyses 1-(2-carboxyphenylamino)-1-deoxy-D-ribulose 5-phosphate + H(+) = (1S,2R)-1-C-(indol-3-yl)glycerol 3-phosphate + CO2 + H2O. Its pathway is amino-acid biosynthesis; L-tryptophan biosynthesis; L-tryptophan from chorismate: step 4/5. This Acidovorax sp. (strain JS42) protein is Indole-3-glycerol phosphate synthase.